The primary structure comprises 161 residues: 3-isopropylmalate dehydratase small subunit (161 aa).

Belongs to the LeuD family. LeuD type 2 subfamily. Heterodimer of LeuC and LeuD.

The catalysed reaction is (2R,3S)-3-isopropylmalate = (2S)-2-isopropylmalate. It functions in the pathway amino-acid biosynthesis; L-leucine biosynthesis; L-leucine from 3-methyl-2-oxobutanoate: step 2/4. Its function is as follows. Catalyzes the isomerization between 2-isopropylmalate and 3-isopropylmalate, via the formation of 2-isopropylmaleate. This is 3-isopropylmalate dehydratase small subunit from Clostridium beijerinckii (strain ATCC 51743 / NCIMB 8052) (Clostridium acetobutylicum).